The sequence spans 419 residues: Capsule polysaccharide modification protein LipB (419 aa).

It is found in the cell inner membrane. Functionally, involved in the phospholipid modification of the capsular polysaccharide, a strong requirement for its translocation to the cell surface. The polypeptide is Capsule polysaccharide modification protein LipB (lipB) (Neisseria meningitidis serogroup B (strain ATCC BAA-335 / MC58)).